The following is a 249-amino-acid chain: Anti-H(O) lectin 2 (249 aa).

N-linked (GlcNAc...) asparagine glycosylation is present at Asn-118. Mn(2+) is bound by residues Glu-130 and Asp-132. Positions 132, 134, 140, and 145 each coordinate Ca(2+). The Mn(2+) site is built by Asp-145 and His-148. A glycan (N-linked (GlcNAc...) asparagine) is linked at Asn-245.

This sequence belongs to the leguminous lectin family.

Di-N-acetylchitobiose specific lectin. This chain is Anti-H(O) lectin 2, found in Ulex europaeus (Furze).